The sequence spans 796 residues: MDVDCAETFSQPCTPLNFNPMTPSTSRVSTPVRPSSTMSARQYSGSPFKAQPQNMEPSNSRVQELREAAVGKRSYTNAWMQGTYAPPQMAGQQQRFSRPPSVIGSTMSHMTNMSEMTAYSYGGLSMLSVNTEMGEFNNFVNQAPYQRALTRVSQVSENQDPTNRQYPMTAPEIIENLESTELINQAAAIRALEPIVKAGGMLQTWGPKGAEPIIRALFQVLIPRPVENENVIRKAFEILHHSILLSNKEIRRIDRMFFRLNAALMDPNGPPVFNVPKPYSIYEIVMTRAIQLDTKFESSAMVLLVHLCCKPHFMKIFFGEDETQQSPAHRRLHKIVIEFAIGNLRRPETKSKNKGLCVSIIKNLSNKNATIKDMSERLGVVSLFHQIMQNEVIHEDLLWSTMQALTVFCGDVKNGTHFVQMGGAQVLCGLLSHGSTRLLHELLKCLRRVSDLPAIQEQDMKESIHCIVQLIGCSDVTIVELATGTLRNIGLHNKMNKAFMVQDGVTSHAIAVLRTSEQFTYQPHANIDLYRKQILSIYENCLSVLNNVTSMAPQDIKESAVSACRMISENADSAYVLLHYFNVGNRKCRKLAVTVMKRVIETVPAFADPFVDLLGTTNEPLPILLLQRAFQSLDEWRKTSVEMMNCDGRSAEQRRELDDRRKDHEDIVKRSVGLLTNLCSQANPRFFHSLKLVLTNGTLNPFQWLTHEMSDGILQEWLAFILSICSRDESLQTFMMYRFLEQAKMTEAFFAELKARRQNSNIQTMLSKIIDLGRHQQRIVSQQHQQHQMQHHRQLM.

The tract at residues 17–59 is disordered; the sequence is NFNPMTPSTSRVSTPVRPSSTMSARQYSGSPFKAQPQNMEPSN. One copy of the ARM repeat lies at 462 to 504; it reads ESIHCIVQLIGCSDVTIVELATGTLRNIGLHNKMNKAFMVQDG.

As to quaternary structure, interacts (independently of ARM repeat) with nhr-25. Component of the beta-catenin-lit-1 complex (also called the lit-1/wrm-1 complex or the wrm-1/lit-1 kinase complex) at least composed of lit-1 and wrm-1. Interacts (via N-terminus) with lit-1; the interaction is direct and activates lit-1 kinase activity which leads to the phosphorylation of pop-1. This promotes pop-1 interaction with par-5 and translocation of pop-1 from the nucleus to the cytoplasm.

It localises to the cytoplasm. The protein localises to the cell cortex. It is found in the nucleus. Its function is as follows. Antagonistic role in the Wnt signaling pathway that operates in embryogenesis. When located at the cortex it has been shown to inhibit Wnt signaling during asymmetric cell division but when relocated to the nucleus it shows positive regulation. Has a role in blastomere signaling during endoderm specification. Component of the beta-catenin-lit-1 complex which promotes phosphorylation, down-regulation and subcellular relocation of pop-1. Within the complex, activates lit-1-dependent kinase activity. Can substitute for bar-1 indicating functional redundancy. Appears to have a role in centrosome positioning and can activation transcription in yeast. Involved in the development of distal tip cells (DTC) by regulating the asymmetric distribution of cye-1 and cki-1 between the daughters of Z1.a and Z4.p cells. This is Armadillo repeat-containing protein wrm-1 from Caenorhabditis elegans.